The following is a 230-amino-acid chain: Ribonuclease 3 (230 aa).

The RNase III domain occupies 10-133 (DPRLQSRIGY…IIGAIYVDSN (124 aa)). A Mg(2+)-binding site is contributed by glutamate 46. Aspartate 50 is a catalytic residue. Mg(2+) contacts are provided by aspartate 119 and glutamate 122. Glutamate 122 is a catalytic residue. Residues 161-230 (DPKSRLQEYL…AAEILKLLEQ (70 aa)) form the DRBM domain.

The protein belongs to the ribonuclease III family. Homodimer. The cofactor is Mg(2+).

It localises to the cytoplasm. The enzyme catalyses Endonucleolytic cleavage to 5'-phosphomonoester.. In terms of biological role, digests double-stranded RNA. Involved in the processing of primary rRNA transcript to yield the immediate precursors to the large and small rRNAs (23S and 16S). Processes some mRNAs, and tRNAs when they are encoded in the rRNA operon. Processes pre-crRNA and tracrRNA of type II CRISPR loci if present in the organism. This is Ribonuclease 3 from Acinetobacter baylyi (strain ATCC 33305 / BD413 / ADP1).